Consider the following 400-residue polypeptide: Phosphoglycerate kinase (400 aa).

Residues 19–21 (DLN), Arg-38, 61–64 (HLGR), Arg-124, and Arg-161 each bind substrate. Residues Lys-211, Gly-299, Glu-330, and 356–359 (GGDS) each bind ATP.

Belongs to the phosphoglycerate kinase family. Monomer.

It is found in the cytoplasm. The catalysed reaction is (2R)-3-phosphoglycerate + ATP = (2R)-3-phospho-glyceroyl phosphate + ADP. It participates in carbohydrate degradation; glycolysis; pyruvate from D-glyceraldehyde 3-phosphate: step 2/5. This Frankia casuarinae (strain DSM 45818 / CECT 9043 / HFP020203 / CcI3) protein is Phosphoglycerate kinase.